The primary structure comprises 252 residues: Pimeloyl-[acyl-carrier protein] methyl ester esterase (252 aa).

The AB hydrolase-1 domain maps to 15–239 (LVMLHGWAMH…FPHCGHAPFL (225 aa)). Substrate-binding positions include Trp-21, 81–82 (SL), and 143–147 (FLTLQ). Catalysis depends on Ser-81, which acts as the Nucleophile. Residues Asp-207 and His-235 contribute to the active site. Position 235 (His-235) interacts with substrate.

This sequence belongs to the AB hydrolase superfamily. Carboxylesterase BioH family. As to quaternary structure, monomer.

The protein localises to the cytoplasm. It catalyses the reaction 6-carboxyhexanoyl-[ACP] methyl ester + H2O = 6-carboxyhexanoyl-[ACP] + methanol + H(+). It participates in cofactor biosynthesis; biotin biosynthesis. Functionally, the physiological role of BioH is to remove the methyl group introduced by BioC when the pimeloyl moiety is complete. It allows to synthesize pimeloyl-ACP via the fatty acid synthetic pathway through the hydrolysis of the ester bonds of pimeloyl-ACP esters. The sequence is that of Pimeloyl-[acyl-carrier protein] methyl ester esterase from Nitrosomonas europaea (strain ATCC 19718 / CIP 103999 / KCTC 2705 / NBRC 14298).